Consider the following 325-residue polypeptide: uncharacterized protein (325 aa).

Coiled coils occupy residues 38–69 and 201–229; these read VHVA…QNQS and ANTD…LEFK.

This is an uncharacterized protein from Acanthamoeba polyphaga (Amoeba).